The following is a 420-amino-acid chain: UDP-N-acetylglucosamine 1-carboxyvinyltransferase (420 aa).

23–24 contributes to the phosphoenolpyruvate binding site; sequence KN. Arginine 92 is a binding site for UDP-N-acetyl-alpha-D-glucosamine. Cysteine 116 acts as the Proton donor in catalysis. Cysteine 116 bears the 2-(S-cysteinyl)pyruvic acid O-phosphothioketal mark. UDP-N-acetyl-alpha-D-glucosamine is bound by residues 121 to 125, 161 to 164, aspartate 306, and isoleucine 328; these read RPVDL and KVSV.

The protein belongs to the EPSP synthase family. MurA subfamily.

The protein resides in the cytoplasm. It carries out the reaction phosphoenolpyruvate + UDP-N-acetyl-alpha-D-glucosamine = UDP-N-acetyl-3-O-(1-carboxyvinyl)-alpha-D-glucosamine + phosphate. It participates in cell wall biogenesis; peptidoglycan biosynthesis. In terms of biological role, cell wall formation. Adds enolpyruvyl to UDP-N-acetylglucosamine. The polypeptide is UDP-N-acetylglucosamine 1-carboxyvinyltransferase (Photobacterium profundum (strain SS9)).